Here is a 236-residue protein sequence, read N- to C-terminus: Sugar fermentation stimulation protein homolog (236 aa).

This sequence belongs to the SfsA family.

This Paramagnetospirillum magneticum (strain ATCC 700264 / AMB-1) (Magnetospirillum magneticum) protein is Sugar fermentation stimulation protein homolog.